The following is a 1017-amino-acid chain: Probable disease resistance protein RDL5 (1017 aa).

Residues 25-52 adopt a coiled-coil conformation; sequence QGVEDQVTELKRDLNMLSSFLKDANAKK. Positions 147 to 460 constitute an NB-ARC domain; the sequence is KQREMRQKFS…AEGIFQPRHY (314 aa). ATP is bound at residue 190-197; the sequence is GMGGLGKT. LRR repeat units follow at residues 602–627, 649–674, 675–699, 768–791, 792–819, 841–865, and 937–962; these read LIHLRYLSLEYAEVTHIPYSLGNLKL, MQELRYLALPSDMGRKTKLELSNLVK, LETLENFSTENSSLEDLCGMVRLST, PSHLTTLYLESCRLEEDPMPILEK, LLQLKELELGFESFSGKKMVCSSGGFPQ, MPLLRTLDIQVCRKLKQLPDEHLPS, and MPFLHTLYIDDCPKLKKLPDGLQFIY.

This sequence belongs to the disease resistance NB-LRR family.

Its function is as follows. Potential disease resistance protein. The protein is Probable disease resistance protein RDL5 (RDL5) of Arabidopsis thaliana (Mouse-ear cress).